Consider the following 134-residue polypeptide: Cytochrome b5 (134 aa).

Position 2 is an N-acetylalanine (Ala2). 3 positions are modified to N6-acetyllysine: Lys7, Lys10, and Lys19. A Cytochrome b5 heme-binding domain is found at 9-85 (VKYYTLEEIQ…SKTFIIGELH (77 aa)). Positions 44 and 68 each coordinate heme. A helical transmembrane segment spans residues 109-131 (WWTNWVIPAISALVVSLMYHFYT).

Belongs to the cytochrome b5 family.

It is found in the endoplasmic reticulum membrane. Its subcellular location is the microsome membrane. It localises to the cytoplasm. Its function is as follows. Cytochrome b5 is a membrane-bound hemoprotein functioning as an electron carrier for several membrane-bound oxygenases. In Sus scrofa (Pig), this protein is Cytochrome b5 (CYB5A).